Consider the following 88-residue polypeptide: UPF0297 protein GTNG_2488 (88 aa).

The protein belongs to the UPF0297 family.

This Geobacillus thermodenitrificans (strain NG80-2) protein is UPF0297 protein GTNG_2488.